Reading from the N-terminus, the 406-residue chain is MNIFRDKKTHINIATIGHFNHGKTTLSAAIAMTLANKKYRLDKKSIKVTLEEKNQGIGIYTHHFQYETTLRHYSHTDCPGHTDYINNMIAGISQVDSTILVVSAVDGSMSQTKEHLLIAKLLGISSFIVFINKEDQLDDDKFVYLVQKEISQFLMSHGFQTNKIPIVSGSALLALETLIQQPNVLRGENYWVDKIYTLIELLDSYIPKPKRKKDKHFLMWIDSVKFLPNIGPIAMGRIEQGTIKVGEFIDIVGFRETRTAKIISLEFFNQSCMQVLAGDDIGVSIEGTKNHNDIKKGMIISTPGTIKSWLEFEAQVYILKREEGGRTSPFFKGYCPQFFFKTTCVTGRIEAIEYTTGSKTWMIMPGDKLKIQVNLVYPIGIKKRMRFLIREGGVLVGVGIISNLIK.

The tr-type G domain maps to 8 to 210 (KTHINIATIG…LLDSYIPKPK (203 aa)). Residues 17–24 (GHFNHGKT), 77–81 (DCPGH), and 132–135 (NKED) contribute to the GTP site. Mg(2+) is bound at residue threonine 24.

The protein belongs to the TRAFAC class translation factor GTPase superfamily. Classic translation factor GTPase family. EF-Tu/EF-1A subfamily. As to quaternary structure, monomer.

It is found in the plastid. Its subcellular location is the chloroplast. It carries out the reaction GTP + H2O = GDP + phosphate + H(+). Its function is as follows. GTP hydrolase that promotes the GTP-dependent binding of aminoacyl-tRNA to the A-site of ribosomes during protein biosynthesis. This is Elongation factor Tu, chloroplastic (tufA) from Chaetosphaeridium globosum (Charophycean green alga).